The primary structure comprises 459 residues: Chaperone SurA (459 aa).

A signal peptide spans 1-23 (MNHRLVALSVASLALLAPLTVPA). 2 PpiC domains span residues 197–301 (VQQI…KVLE) and 312–411 (VTQS…QLME).

It is found in the periplasm. It carries out the reaction [protein]-peptidylproline (omega=180) = [protein]-peptidylproline (omega=0). Chaperone involved in the correct folding and assembly of outer membrane proteins. Recognizes specific patterns of aromatic residues and the orientation of their side chains, which are found more frequently in integral outer membrane proteins. May act in both early periplasmic and late outer membrane-associated steps of protein maturation. The chain is Chaperone SurA from Albidiferax ferrireducens (strain ATCC BAA-621 / DSM 15236 / T118) (Rhodoferax ferrireducens).